The sequence spans 264 residues: uncharacterized protein (264 aa).

One can recognise an ABC transporter domain in the interval 3 to 243 (LQLDNVSLKR…QILSAFFDTP (241 aa)). Residue 35–42 (GLNGAGKT) participates in ATP binding.

This sequence belongs to the ABC transporter superfamily.

This is an uncharacterized protein from Bacillus subtilis (strain 168).